Reading from the N-terminus, the 173-residue chain is 2-C-methyl-D-erythritol 2,4-cyclodiphosphate synthase (173 aa).

A divalent metal cation-binding residues include Asp17 and His19. Residues 17–19 and 49–50 each bind 4-CDP-2-C-methyl-D-erythritol 2-phosphate; these read DVH and HS. His57 is an a divalent metal cation binding site. 4-CDP-2-C-methyl-D-erythritol 2-phosphate is bound by residues 76–80, 147–150, Phe154, and Arg157; these read FPNTD and TTTE.

This sequence belongs to the IspF family. In terms of assembly, homotrimer. A divalent metal cation serves as cofactor.

It carries out the reaction 4-CDP-2-C-methyl-D-erythritol 2-phosphate = 2-C-methyl-D-erythritol 2,4-cyclic diphosphate + CMP. The protein operates within isoprenoid biosynthesis; isopentenyl diphosphate biosynthesis via DXP pathway; isopentenyl diphosphate from 1-deoxy-D-xylulose 5-phosphate: step 4/6. Functionally, involved in the biosynthesis of isopentenyl diphosphate (IPP) and dimethylallyl diphosphate (DMAPP), two major building blocks of isoprenoid compounds. Catalyzes the conversion of 4-diphosphocytidyl-2-C-methyl-D-erythritol 2-phosphate (CDP-ME2P) to 2-C-methyl-D-erythritol 2,4-cyclodiphosphate (ME-CPP) with a corresponding release of cytidine 5-monophosphate (CMP). This Ehrlichia canis (strain Jake) protein is 2-C-methyl-D-erythritol 2,4-cyclodiphosphate synthase.